Consider the following 200-residue polypeptide: Large ribosomal subunit protein uL4 (200 aa).

A disordered region spans residues 38-72 (GRQGTKQQKTRSDVAGGGKRPWRQKGTGRARAGTT).

The protein belongs to the universal ribosomal protein uL4 family. Part of the 50S ribosomal subunit.

Functionally, one of the primary rRNA binding proteins, this protein initially binds near the 5'-end of the 23S rRNA. It is important during the early stages of 50S assembly. It makes multiple contacts with different domains of the 23S rRNA in the assembled 50S subunit and ribosome. Forms part of the polypeptide exit tunnel. The polypeptide is Large ribosomal subunit protein uL4 (Pseudomonas putida (strain ATCC 700007 / DSM 6899 / JCM 31910 / BCRC 17059 / LMG 24140 / F1)).